Here is a 1710-residue protein sequence, read N- to C-terminus: Ankyrin repeat domain-containing protein 26 (1710 aa).

Residues 1 to 41 form a disordered region; sequence MKKIFSKKGESPLGSFARRQRSSAGGGGEPGEGAYSQPGYH. Residues S11 and S15 each carry the phosphoserine modification. 5 ANK repeats span residues 45–75, 79–108, 112–141, 145–174, and 178–207; these read RDLG…GLND, MNRT…QLNV, ENRT…DPNL, HGNT…NIEA, and DDLT…NVNA. The segment at 222 to 274 is disordered; sequence KEERIPKHSSQNSNSVDESSEDSLSRLSGKPGVDDSWPTSDDEDLNFDTKNVP. Phosphoserine is present on residues S241, S261, S489, and S530. A disordered region spans residues 504–630; the sequence is DSVPNKAGGM…EKRTSKESVN (127 aa). Residues 529–566 adopt a coiled-coil conformation; sequence ASEEEQEREGSENNQPQVEEERKKHRNNEMEVSANIHD. The segment covering 569–580 has biased composition (acidic residues); that stretch reads TDDAEDDDDDDG. Composition is skewed to basic and acidic residues over residues 586-602 and 613-626; these read KSGE…ENKE and KEVK…RTSK. Residue S631 is modified to Phosphoserine. Acidic residues predominate over residues 650-660; it reads DSSLSEIDEDE. The segment at 650–698 is disordered; sequence DSSLSEIDEDEGRPTKKTSNEKNKVKNQIQSMDDVDDLTQSSETASEDC. Positions 661 to 673 are enriched in basic and acidic residues; that stretch reads GRPTKKTSNEKNK. 4 coiled-coil regions span residues 743–873, 905–1472, 1517–1587, and 1649–1674; these read KNHC…NARM, EEEK…MVEL, NNFA…NTKL, and LSKM…LESG. Residues 892 to 912 are disordered; the sequence is AQKKMNSENSHSHEEEKDLSH.

Interacts with TRIO. Interacts with GPS2. Interacts with CCDC85B. Interacts with HMMR.

In terms of biological role, acts as a regulator of adipogenesis. Involved in the regulation of the feeding behavior. The protein is Ankyrin repeat domain-containing protein 26 of Homo sapiens (Human).